The chain runs to 937 residues: Diacylglycerol kinase theta (937 aa).

Positions 1 to 48 are disordered; the sequence is MATAAESGARTWPGSGSPRLGSPAGSPVLGISGRARPGSGPERTGRAI. Residues S22 and S26 each carry the phosphoserine modification. 3 Phorbol-ester/DAG-type zinc fingers span residues 54–102, 115–162, and 177–228; these read GHSF…KTPC, AHCF…CSDC, and HHHW…TPEC. The interval 359 to 378 is disordered; sequence GKAGTTEEETSKDSGPGDSV. One can recognise a Ras-associating domain in the interval 390–489; that stretch reads TQEILKIYPD…TRFYVAEARA (100 aa). 2 short sequence motifs (LXXLL motif) span residues 550–554 and 569–573; these read LYMLA and LPDVL. A DAGKc domain is found at 579–716; it reads PDCCPLLVFV…MDRWTILLDA (138 aa). A disordered region spans residues 911–937; sequence AKQKPRKAGAIRDTRVDTLPAPEGNPL.

It belongs to the eukaryotic diacylglycerol kinase family. Interacts with RHOA (constitutively activated, GTP-bound); the interaction inhibits DGKQ. Interacts with PRKCE. Interacts with PRKCH. Interacts with PLCB1. Interacts with NR5A1; the interaction requires both LXXLL motifs in DGKQ and is required for full phosphatidic acid-mediated activation of NR5A1. Phosphorylated by PRKCE and PRKCH in vitro. Widely expressed with higher expression in the brain and, to a lesser extent, in the small intestine, duodenum, and liver. In brain, expressed in gray matter. Expression is most intense in the cerebellar cortex and hippocampus, while moderate expression is seen in the olfactory bulb neuronal layers and brain stem nuclei. In the cerebellar cortex, equally expressed in both the Purkinje cell somata and the granule cells.

It is found in the cytoplasm. It localises to the cytosol. The protein localises to the cell membrane. The protein resides in the synapse. Its subcellular location is the cytoskeleton. It is found in the nucleus. It localises to the nucleus speckle. The protein localises to the nucleus matrix. It catalyses the reaction a 1,2-diacyl-sn-glycerol + ATP = a 1,2-diacyl-sn-glycero-3-phosphate + ADP + H(+). It carries out the reaction a 1-O-alkyl-sn-glycerol + ATP = a 1-O-alkyl-sn-glycero-3-phosphate + ADP + H(+). The enzyme catalyses 1-O-alkyl-2-acyl-sn-glycerol + ATP = 1-O-alkyl-2-acyl-sn-glycero-3-phosphate + ADP + H(+). The catalysed reaction is 1,2-di-(9Z-octadecenoyl)-sn-glycerol + ATP = 1,2-di-(9Z-octadecenoyl)-sn-glycero-3-phosphate + ADP + H(+). It catalyses the reaction 1-O-hexadecyl-sn-glycerol + ATP = 1-O-hexadecyl-sn-glycero-3-phosphate + ADP + H(+). It carries out the reaction 1-O-hexadecyl-2-acetyl-sn-glycerol + ATP = 1-O-hexadecyl-2-acetyl-sn-glycero-3-phosphate + ADP + H(+). The enzyme catalyses 1-octadecanoyl-2-(5Z,8Z,11Z,14Z-eicosatetraenoyl)-sn-glycerol + ATP = 1-octadecanoyl-2-(5Z,8Z,11Z,14Z-eicosatetraenoyl)-sn-glycero-3-phosphate + ADP + H(+). Its pathway is lipid metabolism; glycerolipid metabolism. Activated by phosphatidylserine. Diacylglycerol kinase that converts diacylglycerol/DAG into phosphatidic acid/phosphatidate/PA and regulates the respective levels of these two bioactive lipids. Thereby, acts as a central switch between the signaling pathways activated by these second messengers with different cellular targets and opposite effects in numerous biological processes. Within the adrenocorticotropic hormone signaling pathway, produces phosphatidic acid which in turn activates NR5A1 and subsequent steroidogenic gene transcription. Also functions downstream of the nerve growth factor signaling pathway being specifically activated in the nucleus by the growth factor. Through its diacylglycerol activity also regulates synaptic vesicle endocytosis. The chain is Diacylglycerol kinase theta from Rattus norvegicus (Rat).